Consider the following 191-residue polypeptide: Protein GrpE (191 aa).

Composition is skewed to basic and acidic residues over residues 1–19 and 29–42; these read MKDE…EPES and QQGE…EKEC. A disordered region spans residues 1 to 42; the sequence is MKDEHNQEHDHLSQKEPESYQKACACKEQQGEEKQEASEKEC.

It belongs to the GrpE family. In terms of assembly, homodimer.

The protein localises to the cytoplasm. In terms of biological role, participates actively in the response to hyperosmotic and heat shock by preventing the aggregation of stress-denatured proteins, in association with DnaK and GrpE. It is the nucleotide exchange factor for DnaK and may function as a thermosensor. Unfolded proteins bind initially to DnaJ; upon interaction with the DnaJ-bound protein, DnaK hydrolyzes its bound ATP, resulting in the formation of a stable complex. GrpE releases ADP from DnaK; ATP binding to DnaK triggers the release of the substrate protein, thus completing the reaction cycle. Several rounds of ATP-dependent interactions between DnaJ, DnaK and GrpE are required for fully efficient folding. This is Protein GrpE from Helicobacter pylori (strain HPAG1).